A 161-amino-acid chain; its full sequence is Large ribosomal subunit protein uL15 (161 aa).

The segment at 1–57 (MRLKDAIPKKGSQQRGRRVGRGISAGQGASCGKGMRGQKSRSGGSTRPGFEGGQNPL) is disordered. A compositionally biased stretch (gly residues) spans 23–35 (ISAGQGASCGKGM).

Belongs to the universal ribosomal protein uL15 family. In terms of assembly, part of the 50S ribosomal subunit.

Functionally, binds to the 23S rRNA. This chain is Large ribosomal subunit protein uL15, found in Trichodesmium erythraeum (strain IMS101).